The sequence spans 114 residues: Methylamine utilization protein MauL (114 aa).

It participates in one-carbon metabolism; methylamine degradation. In terms of biological role, probably involved in TTQ prosthetic group biosynthesis. The protein is Methylamine utilization protein MauL (mauL) of Methylorubrum extorquens (strain ATCC 14718 / DSM 1338 / JCM 2805 / NCIMB 9133 / AM1) (Methylobacterium extorquens).